Here is an 85-residue protein sequence, read N- to C-terminus: Large ribosomal subunit protein bL31B (85 aa).

Belongs to the bacterial ribosomal protein bL31 family. Type B subfamily. As to quaternary structure, part of the 50S ribosomal subunit.

The polypeptide is Large ribosomal subunit protein bL31B (Clavibacter michiganensis subsp. michiganensis (strain NCPPB 382)).